Here is a 102-residue protein sequence, read N- to C-terminus: Large ribosomal subunit protein uL24 (102 aa).

It belongs to the universal ribosomal protein uL24 family. In terms of assembly, part of the 50S ribosomal subunit.

One of two assembly initiator proteins, it binds directly to the 5'-end of the 23S rRNA, where it nucleates assembly of the 50S subunit. Functionally, one of the proteins that surrounds the polypeptide exit tunnel on the outside of the subunit. The polypeptide is Large ribosomal subunit protein uL24 (Finegoldia magna (strain ATCC 29328 / DSM 20472 / WAL 2508) (Peptostreptococcus magnus)).